We begin with the raw amino-acid sequence, 317 residues long: UV DNA damage endonuclease (317 aa).

The protein belongs to the uve1/UvsE family.

In terms of biological role, component in a DNA repair pathway. Removal of UV LIGHT damaged nucleotides. Recognizes pyrimidine dimers and cleave a phosphodiester bond immediately 5' to the lesion. The polypeptide is UV DNA damage endonuclease (Bacillus mycoides (strain KBAB4) (Bacillus weihenstephanensis)).